Consider the following 49-residue polypeptide: MGKRKANHTISGMNAASAQGQGAGYNEEFANENLTPAERQNNKKRKKNQ.

The tract at residues Met1–Gln49 is disordered. Polar residues predominate over residues His8–Gly20.

The protein belongs to the SspO family.

It is found in the spore core. The chain is Small, acid-soluble spore protein O from Bacillus anthracis (strain A0248).